We begin with the raw amino-acid sequence, 249 residues long: Exosome complex component Rrp4 (249 aa).

The region spanning 73–144 (NDIVIGLVED…RSIDPVLSVK (72 aa)) is the S1 motif domain. Residues 154–211 (GIVIDIMPVKVPRVIGKNKSMYETLTSKSGCSIFVANNGRIWATCPSRFSEEILIEAI) form the KH domain.

Belongs to the RRP4 family. As to quaternary structure, component of the archaeal exosome complex. Forms a trimer of Rrp4 and/or Csl4 subunits. The trimer associates with a hexameric ring-like arrangement composed of 3 Rrp41-Rrp42 heterodimers.

It is found in the cytoplasm. Its function is as follows. Non-catalytic component of the exosome, which is a complex involved in RNA degradation. Increases the RNA binding and the efficiency of RNA degradation. Confers strong poly(A) specificity to the exosome. In Saccharolobus solfataricus (strain ATCC 35092 / DSM 1617 / JCM 11322 / P2) (Sulfolobus solfataricus), this protein is Exosome complex component Rrp4.